The following is a 335-amino-acid chain: NmrA-like family domain-containing oxidoreductase lnbB (335 aa).

NADP(+) contacts are provided by residues 14–18 (GTGNQ), 41–45 (RHPDS), 62–63 (DG), 83–85 (TNS), K142, and 166–169 (YYEQ).

It belongs to the NmrA-type oxidoreductase family.

The protein operates within secondary metabolite biosynthesis. In terms of biological role, nmrA-like family domain-containing oxidoreductase; part of the lnb gene cluster that mediates the biosynthesis of diastereomeric piperazines. Lna and lnb clusters encode sets of enzymes that produce overlapping sets of previously undescribed metabolites such as piperazinomycin-like metabolites or morpholine. The lna and lnb biosynthetic pathways appear to be part of a signaling network that controls the formation of sclerotia, a resilient overwintering structure. One primary function of the non-canonical nonribosomal peptide synthetases lnaA and lnbA consists in the reduction of L-tyrosine. The presence in the clusters of tailoring enzymes such as the oxidoreductases lnaB, lnbB, lnaE or lnbE, as well as of the cytochrome P450 monooxygenases lnaC, lnaD, or lnbC, might explain formation of various diastereomeric piperazines. The chain is NmrA-like family domain-containing oxidoreductase lnbB from Aspergillus flavus (strain ATCC 200026 / FGSC A1120 / IAM 13836 / NRRL 3357 / JCM 12722 / SRRC 167).